A 109-amino-acid polypeptide reads, in one-letter code: Parvalbumin beta (109 aa).

Ala2 is subject to N-acetylalanine. 2 consecutive EF-hand domains span residues 39–74 (KSAD…FKAG) and 78–109 (LSDA…MIKG). Positions 52, 54, 56, 58, 60, 63, 91, 93, 95, 97, and 102 each coordinate Ca(2+).

It belongs to the parvalbumin family. Post-translationally, the N-terminus is blocked.

Functionally, in muscle, parvalbumin is thought to be involved in relaxation after contraction. It binds two calcium ions. This is Parvalbumin beta from Scomber scombrus (Atlantic mackerel).